The sequence spans 255 residues: Putative F-box protein L126 (255 aa).

An F-box domain is found at M1 to K46.

The protein is Putative F-box protein L126 of Acanthamoeba polyphaga (Amoeba).